Reading from the N-terminus, the 207-residue chain is Octanoyltransferase (207 aa).

A BPL/LPL catalytic domain is found at 29-204 (AETRDELWVV…HLERHLSTSK (176 aa)). Substrate is bound by residues 68–75 (RGGQITYH), 135–137 (SLG), and 148–150 (GLS). Cysteine 166 (acyl-thioester intermediate) is an active-site residue.

Belongs to the LipB family.

It localises to the cytoplasm. It catalyses the reaction octanoyl-[ACP] + L-lysyl-[protein] = N(6)-octanoyl-L-lysyl-[protein] + holo-[ACP] + H(+). Its pathway is protein modification; protein lipoylation via endogenous pathway; protein N(6)-(lipoyl)lysine from octanoyl-[acyl-carrier-protein]: step 1/2. Its function is as follows. Catalyzes the transfer of endogenously produced octanoic acid from octanoyl-acyl-carrier-protein onto the lipoyl domains of lipoate-dependent enzymes. Lipoyl-ACP can also act as a substrate although octanoyl-ACP is likely to be the physiological substrate. This Chromobacterium violaceum (strain ATCC 12472 / DSM 30191 / JCM 1249 / CCUG 213 / NBRC 12614 / NCIMB 9131 / NCTC 9757 / MK) protein is Octanoyltransferase.